The following is a 251-amino-acid chain: Hydroxyacylglutathione hydrolase (251 aa).

7 residues coordinate Zn(2+): H53, H55, D57, H58, H110, D127, and H165.

Belongs to the metallo-beta-lactamase superfamily. Glyoxalase II family. In terms of assembly, monomer. Zn(2+) is required as a cofactor.

It carries out the reaction an S-(2-hydroxyacyl)glutathione + H2O = a 2-hydroxy carboxylate + glutathione + H(+). It participates in secondary metabolite metabolism; methylglyoxal degradation; (R)-lactate from methylglyoxal: step 2/2. Thiolesterase that catalyzes the hydrolysis of S-D-lactoyl-glutathione to form glutathione and D-lactic acid. This chain is Hydroxyacylglutathione hydrolase, found in Serratia proteamaculans (strain 568).